The primary structure comprises 310 residues: Small ribosomal subunit protein uS2 (310 aa).

2 disordered regions span residues 213 to 240 and 271 to 310; these read EEQA…GGAA and WDSV…TDWA. Over residues 216–227 the composition is skewed to low complexity; the sequence is AALARQQEEANA. Over residues 297-310 the composition is skewed to polar residues; the sequence is VTMQEQAKPSTDWA.

Belongs to the universal ribosomal protein uS2 family. Component of the small ribosomal subunit. Mature ribosomes consist of a small (40S) and a large (60S) subunit. The 40S subunit contains about 33 different proteins and 1 molecule of RNA (18S). The 60S subunit contains about 49 different proteins and 3 molecules of RNA (28S, 5.8S and 5S). Interacts with ribosomal protein S21.

The protein resides in the cytoplasm. In terms of biological role, required for the assembly and/or stability of the 40S ribosomal subunit. Required for the processing of the 20S rRNA-precursor to mature 18S rRNA in a late step of the maturation of 40S ribosomal subunits. This Nematostella vectensis (Starlet sea anemone) protein is Small ribosomal subunit protein uS2.